The following is a 78-amino-acid chain: Acyl carrier protein (78 aa).

Positions 2–77 constitute a Carrier domain; sequence SDTADRVKKI…DAIKYIDENK (76 aa). S37 is subject to O-(pantetheine 4'-phosphoryl)serine.

It belongs to the acyl carrier protein (ACP) family. In terms of processing, 4'-phosphopantetheine is transferred from CoA to a specific serine of apo-ACP by AcpS. This modification is essential for activity because fatty acids are bound in thioester linkage to the sulfhydryl of the prosthetic group.

It localises to the cytoplasm. The protein operates within lipid metabolism; fatty acid biosynthesis. In terms of biological role, carrier of the growing fatty acid chain in fatty acid biosynthesis. This chain is Acyl carrier protein, found in Novosphingobium aromaticivorans (strain ATCC 700278 / DSM 12444 / CCUG 56034 / CIP 105152 / NBRC 16084 / F199).